The primary structure comprises 4981 residues: Protocadherin Fat 4 (4981 aa).

The first 38 residues, 1–38 (MDLAPDRATGRPWLPLHTLSVSQLLRVFWLLSLLPGQA), serve as a signal peptide directing secretion. Residues 39–4504 (WVHGAEPRQV…PEEISLPLWA (4466 aa)) are Extracellular-facing. Cadherin domains follow at residues 43–135 (AEPR…APVF), 136–250 (PDPS…PPVF), 251–353 (GSSH…DPVV), 359–475 (PATS…PPVF), 476–582 (SQQV…KPVF), 584–689 (QPEG…SPVF), 690–793 (YPVQ…PPVF), 794–893 (SQVA…SPHF), 894–996 (LQAI…SPVF), 997–1100 (DQLS…RPLF), 1101–1210 (NSTN…APKF), 1211–1315 (LKDF…TPSF), 1316–1420 (PKST…PPSF), 1421–1529 (PPGD…VPMF), 1529–1629 (FISQ…GPVF), 1630–1740 (TQPK…PPVF), 1741–1841 (PTDM…TPKF), 1842–1944 (SRPV…PPIF), 1945–2051 (SLNS…PPTF), 2051–2154 (FLSP…NPIF), 2155–2259 (AQAL…VPVF), 2260–2364 (ELSP…VPTF), 2365–2466 (ASKA…PPRF), 2467–2567 (QHHP…FPKV), 2568–2669 (RAKE…APIF), 2670–2773 (KEDP…APRF), 2773–2872 (FSQI…APRF), 2873–2983 (SRTS…APQF), 2984–3089 (LKSK…TPEF), 3090–3194 (SQSH…SPVF), 3195–3298 (LSDD…VPRF), 3299–3404 (VSKL…PPIF), 3405–3510 (TLNI…GPML), and 3509–3620 (MLTV…VEIF). N-linked (GlcNAc...) asparagine glycans are attached at residues Asn84 and Asn237. N-linked (GlcNAc...) asparagine glycosylation is found at Asn393, Asn416, Asn435, Asn483, Asn551, Asn615, Asn676, Asn721, Asn825, Asn880, Asn946, Asn1085, Asn1101, Asn1104, Asn1225, Asn1296, Asn1389, and Asn1514. N-linked (GlcNAc...) asparagine glycans are attached at residues Asn1828, Asn1899, Asn1967, and Asn2119. N-linked (GlcNAc...) asparagine glycosylation is found at Asn2387 and Asn2430. Asn2921, Asn2937, Asn3036, Asn3140, Asn3217, Asn3392, and Asn3477 each carry an N-linked (GlcNAc...) asparagine glycan. N-linked (GlcNAc...) asparagine glycans are attached at residues Asn3706 and Asn3758. One can recognise an EGF-like 1 domain in the interval 3802–3860 (DHDSCVHGPCQNGGSCLRRLAVSSVLKSRESLPVIIVANEPLQPFLCKCLPGYAGSWCE). 12 disulfide bridges follow: Cys3806/Cys3817, Cys3811/Cys3848, Cys3850/Cys3859, Cys3866/Cys3877, Cys3871/Cys3886, Cys3888/Cys3897, Cys3904/Cys3915, Cys3909/Cys3924, Cys3926/Cys3935, Cys3942/Cys3953, Cys3947/Cys3962, and Cys3964/Cys3973. The 37-residue stretch at 3862 to 3898 (DIDECLPSPCHSGGTCHNLVGGFSCSCPDGFTGRACE) folds into the EGF-like 2; calcium-binding domain. Positions 3900–3936 (DINECLQSPCKNGAICQNFPGSFNCVCKTGYTGKMCE) constitute an EGF-like 3; calcium-binding domain. Positions 3938–3974 (SVNYCECNPCFNGGSCQSGVDSYYCHCPFGVFGKHCE) constitute an EGF-like 4 domain. One can recognise a Laminin G-like 1 domain in the interval 3975–4159 (LNSYGFEELS…LAAQGILDQC (185 aa)). N-linked (GlcNAc...) asparagine glycosylation occurs at Asn4017. 4 disulfides stabilise this stretch: Cys4133/Cys4159, Cys4166/Cys4177, Cys4171/Cys4186, and Cys4188/Cys4197. Residues 4162 to 4198 (LEGACTRSPCQHGGTCMDYWSWQQCHCKEGLTGKYCE) form the EGF-like 5 domain. Residues 4217-4398 (YHMSQNEKRE…KTDPSVKIGC (182 aa)) form the Laminin G-like 2 domain. 2 N-linked (GlcNAc...) asparagine glycosylation sites follow: Asn4267 and Asn4312. 4 cysteine pairs are disulfide-bonded: Cys4365–Cys4398, Cys4430–Cys4441, Cys4435–Cys4451, and Cys4453–Cys4462. In terms of domain architecture, EGF-like 6 spans 4426–4463 (PPGDCASHPCQNGGSCEPGLHSGFTCSCPDSHTGRTCE). Residues 4505-4525 (VPAIVGSCATVLALLVLSLIL) form a helical membrane-spanning segment. The Cytoplasmic portion of the chain corresponds to 4526–4981 (CNQCRGKKAK…PKDGEAEQYV (456 aa)). 5 disordered regions span residues 4534–4584 (AKNP…PDII), 4680–4713 (QGLR…STFY), 4752–4856 (RSKS…MEYD), 4869–4911 (KLSQ…AAPG), and 4957–4981 (AAAN…EQYV). The segment covering 4680–4699 (QGLRTSSLSHSACPTPNPLS) has biased composition (polar residues). The interval 4706–4795 (FSKSSTFYRN…GLSIEEVERL (90 aa)) is necessary and sufficient for interaction with MPDZ. Basic and acidic residues predominate over residues 4809-4821 (DHGRSSSEEDCRR). At Ser4876 the chain carries Phosphoserine. A compositionally biased stretch (basic and acidic residues) spans 4971–4981 (VPKDGEAEQYV).

Heterophilic interaction with DCHS1; this interaction affects their respective protein levels. Interacts (via cytoplasmic domain) with MPDZ. Forms a complex with PALS1 and MPDZ. In terms of tissue distribution, widely expressed. Expressed in fetal brain, infant brain, brain tumor and colorectal cancer.

The protein resides in the membrane. In terms of biological role, cadherins are calcium-dependent cell adhesion proteins. FAT4 plays a role in the maintenance of planar cell polarity as well as in inhibition of YAP1-mediated neuroprogenitor cell proliferation and differentiation. The sequence is that of Protocadherin Fat 4 (FAT4) from Homo sapiens (Human).